The primary structure comprises 314 residues: Protein EXORDIUM (314 aa).

Residues 1-21 (MYLLVFKLFLFLSLLQISVSA) form the signal peptide.

Belongs to the EXORDIUM family. As to expression, expressed in root tips, vascular tissue of roots, shoot apex, rosette leaves and embryos.

Its subcellular location is the secreted. The protein localises to the extracellular space. It localises to the apoplast. Its function is as follows. Required for cell expansion in leaves. May mediate brassinosteroid (BR)-induced leaf growth. May play a role in the control of BR responses in roots. May be involved in signaling processes that coordinate BR responses with environmental or developmental signals. The sequence is that of Protein EXORDIUM (EXO) from Arabidopsis thaliana (Mouse-ear cress).